Consider the following 190-residue polypeptide: Female-specific histamine-binding protein 2 (190 aa).

The first 19 residues, 1–19, serve as a signal peptide directing secretion; the sequence is MKLLILSLALVLALSQVKG. Histamine is bound by residues Ser-39, Asp-43, Tyr-55, Asp-58, Trp-61, Glu-101, Phe-117, Tyr-119, Phe-127, Asp-139, Glu-154, and Trp-156. 2 disulfide bridges follow: Cys-67–Cys-188 and Cys-138–Cys-167.

The protein belongs to the calycin superfamily. Histamine-binding salivary protein family. As to quaternary structure, monomer. In terms of tissue distribution, expressed in salivary glands.

The protein localises to the secreted. Functionally, salivary tick protein that acts by scavenging histamine at the wound site, outcompeting histamine receptors for histamine, thereby overcoming host inflammatory responses. Binds histamine with a high-affinity (Kd=1.7 nM). Contains two binding histamine sites (H and L), that appear to bind histamine with differing affinities (high and low). This Rhipicephalus appendiculatus (Brown ear tick) protein is Female-specific histamine-binding protein 2.